A 165-amino-acid chain; its full sequence is Small ribosomal subunit protein bS16 (165 aa).

Residues 84 to 165 (WTHGNNPEKG…EAPAEEAAEG (82 aa)) form a disordered region. Positions 89 to 130 (NPEKGKPGKKAQERLAERAQREEERKQAEADAKAAAEAEKAA) are enriched in basic and acidic residues. The span at 131 to 157 (AAEAAAAAAAAPAVEEAPAEEAPAAEA) shows a compositional bias: low complexity.

Belongs to the bacterial ribosomal protein bS16 family.

The polypeptide is Small ribosomal subunit protein bS16 (Caulobacter vibrioides (strain ATCC 19089 / CIP 103742 / CB 15) (Caulobacter crescentus)).